Here is a 384-residue protein sequence, read N- to C-terminus: uncharacterized protein (384 aa).

Positions 137 to 303 (EHDAPNRLWQ…VPGSRYQPSA (167 aa)) constitute an Integrase catalytic domain.

This is an uncharacterized protein from Escherichia coli (strain K12).